Consider the following 355-residue polypeptide: UDP-N-acetylglucosamine--N-acetylmuramyl-(pentapeptide) pyrophosphoryl-undecaprenol N-acetylglucosamine transferase (355 aa).

UDP-N-acetyl-alpha-D-glucosamine-binding positions include 15-17 (TGG), Asn127, Arg163, Ser191, Ile244, 263-268 (ALTVSE), and Gln288.

Belongs to the glycosyltransferase 28 family. MurG subfamily.

It localises to the cell inner membrane. It catalyses the reaction di-trans,octa-cis-undecaprenyl diphospho-N-acetyl-alpha-D-muramoyl-L-alanyl-D-glutamyl-meso-2,6-diaminopimeloyl-D-alanyl-D-alanine + UDP-N-acetyl-alpha-D-glucosamine = di-trans,octa-cis-undecaprenyl diphospho-[N-acetyl-alpha-D-glucosaminyl-(1-&gt;4)]-N-acetyl-alpha-D-muramoyl-L-alanyl-D-glutamyl-meso-2,6-diaminopimeloyl-D-alanyl-D-alanine + UDP + H(+). It functions in the pathway cell wall biogenesis; peptidoglycan biosynthesis. Cell wall formation. Catalyzes the transfer of a GlcNAc subunit on undecaprenyl-pyrophosphoryl-MurNAc-pentapeptide (lipid intermediate I) to form undecaprenyl-pyrophosphoryl-MurNAc-(pentapeptide)GlcNAc (lipid intermediate II). This is UDP-N-acetylglucosamine--N-acetylmuramyl-(pentapeptide) pyrophosphoryl-undecaprenol N-acetylglucosamine transferase from Escherichia coli O9:H4 (strain HS).